A 183-amino-acid polypeptide reads, in one-letter code: UPF0397 protein EAT1b_2102 (183 aa).

The next 5 helical transmembrane spans lie at Ile9 to Pro29, Ala42 to Ile62, Ser74 to Ala94, Ala117 to Ala137, and Gly147 to Val167.

It belongs to the UPF0397 family.

Its subcellular location is the cell membrane. The protein is UPF0397 protein EAT1b_2102 of Exiguobacterium sp. (strain ATCC BAA-1283 / AT1b).